Consider the following 278-residue polypeptide: Formamidopyrimidine-DNA glycosylase (278 aa).

The active-site Schiff-base intermediate with DNA is the Pro2. Catalysis depends on Glu3, which acts as the Proton donor. The Proton donor; for beta-elimination activity role is filled by Lys59. DNA is bound by residues His93, Arg112, and Arg153. An FPG-type zinc finger spans residues 238–272 (NVYDRAGEPCPRCQSTIERIVVAQRSTYFCPTCQI). Arg262 acts as the Proton donor; for delta-elimination activity in catalysis.

The protein belongs to the FPG family. Monomer. Requires Zn(2+) as cofactor.

The catalysed reaction is Hydrolysis of DNA containing ring-opened 7-methylguanine residues, releasing 2,6-diamino-4-hydroxy-5-(N-methyl)formamidopyrimidine.. It catalyses the reaction 2'-deoxyribonucleotide-(2'-deoxyribose 5'-phosphate)-2'-deoxyribonucleotide-DNA = a 3'-end 2'-deoxyribonucleotide-(2,3-dehydro-2,3-deoxyribose 5'-phosphate)-DNA + a 5'-end 5'-phospho-2'-deoxyribonucleoside-DNA + H(+). In terms of biological role, involved in base excision repair of DNA damaged by oxidation or by mutagenic agents. Acts as a DNA glycosylase that recognizes and removes damaged bases. Has a preference for oxidized purines, such as 7,8-dihydro-8-oxoguanine (8-oxoG). Has AP (apurinic/apyrimidinic) lyase activity and introduces nicks in the DNA strand. Cleaves the DNA backbone by beta-delta elimination to generate a single-strand break at the site of the removed base with both 3'- and 5'-phosphates. In Chloroflexus aurantiacus (strain ATCC 29366 / DSM 635 / J-10-fl), this protein is Formamidopyrimidine-DNA glycosylase.